Here is a 237-residue protein sequence, read N- to C-terminus: Uridylate kinase (237 aa).

9–12 (KLSG) is an ATP binding site. Residue glycine 51 participates in UMP binding. 2 residues coordinate ATP: glycine 52 and arginine 56. Residues aspartate 71 and 132–139 (CGNPFFTT) contribute to the UMP site. Residues threonine 159, tyrosine 165, and aspartate 168 each coordinate ATP.

This sequence belongs to the UMP kinase family. As to quaternary structure, homohexamer.

Its subcellular location is the cytoplasm. The catalysed reaction is UMP + ATP = UDP + ADP. Its pathway is pyrimidine metabolism; CTP biosynthesis via de novo pathway; UDP from UMP (UMPK route): step 1/1. Inhibited by UTP. Its function is as follows. Catalyzes the reversible phosphorylation of UMP to UDP. The polypeptide is Uridylate kinase (Prochlorococcus marinus (strain MIT 9303)).